We begin with the raw amino-acid sequence, 359 residues long: 3-dehydroquinate synthase (359 aa).

Residues 69-74 (DGEAYK), 103-107 (GVIGD), 127-128 (TT), K140, K149, and 167-170 (CLKT) each bind NAD(+). The Zn(2+) site is built by E182, H245, and H262.

It belongs to the sugar phosphate cyclases superfamily. Dehydroquinate synthase family. Co(2+) is required as a cofactor. The cofactor is Zn(2+). It depends on NAD(+) as a cofactor.

It localises to the cytoplasm. It carries out the reaction 7-phospho-2-dehydro-3-deoxy-D-arabino-heptonate = 3-dehydroquinate + phosphate. It participates in metabolic intermediate biosynthesis; chorismate biosynthesis; chorismate from D-erythrose 4-phosphate and phosphoenolpyruvate: step 2/7. In terms of biological role, catalyzes the conversion of 3-deoxy-D-arabino-heptulosonate 7-phosphate (DAHP) to dehydroquinate (DHQ). The sequence is that of 3-dehydroquinate synthase from Aeromonas salmonicida (strain A449).